Reading from the N-terminus, the 178-residue chain is Ribosome maturation factor RimP (178 aa).

This sequence belongs to the RimP family.

It is found in the cytoplasm. Its function is as follows. Required for maturation of 30S ribosomal subunits. The sequence is that of Ribosome maturation factor RimP from Cutibacterium acnes (strain DSM 16379 / KPA171202) (Propionibacterium acnes).